The primary structure comprises 364 residues: tRNA 2-selenouridine synthase (364 aa).

Residues Leu14–Trp137 enclose the Rhodanese domain. Residue Cys97 is the S-selanylcysteine intermediate of the active site.

The protein belongs to the SelU family. Monomer.

It catalyses the reaction 5-methylaminomethyl-2-thiouridine(34) in tRNA + selenophosphate + (2E)-geranyl diphosphate + H2O + H(+) = 5-methylaminomethyl-2-selenouridine(34) in tRNA + (2E)-thiogeraniol + phosphate + diphosphate. The enzyme catalyses 5-methylaminomethyl-2-thiouridine(34) in tRNA + (2E)-geranyl diphosphate = 5-methylaminomethyl-S-(2E)-geranyl-thiouridine(34) in tRNA + diphosphate. The catalysed reaction is 5-methylaminomethyl-S-(2E)-geranyl-thiouridine(34) in tRNA + selenophosphate + H(+) = 5-methylaminomethyl-2-(Se-phospho)selenouridine(34) in tRNA + (2E)-thiogeraniol. It carries out the reaction 5-methylaminomethyl-2-(Se-phospho)selenouridine(34) in tRNA + H2O = 5-methylaminomethyl-2-selenouridine(34) in tRNA + phosphate. Involved in the post-transcriptional modification of the uridine at the wobble position (U34) of tRNA(Lys), tRNA(Glu) and tRNA(Gln). Catalyzes the conversion of 2-thiouridine (S2U-RNA) to 2-selenouridine (Se2U-RNA). Acts in a two-step process involving geranylation of 2-thiouridine (S2U) to S-geranyl-2-thiouridine (geS2U) and subsequent selenation of the latter derivative to 2-selenouridine (Se2U) in the tRNA chain. This chain is tRNA 2-selenouridine synthase, found in Salmonella gallinarum (strain 287/91 / NCTC 13346).